The primary structure comprises 209 residues: MSKVTQISHPLILHKLAFMRDKKTGSKDFREMVEEVAMLMAYEVTREMQLETVEIETPICITKCKMLAGKKVAIVPILRAGLGMVNGVLKLIPAAKVGHIGLYRDEKTLKPVEYFCKLPQDIEERDIIVTDPMLATGGSAIDAITLLKKRGAKYIRLMCLIGAPEGIAAVQEAHPDVDIYLASIDEKLDENGYIVPGLGDAGDRLFGTK.

Residues R79, R104, and 131–139 each bind 5-phospho-alpha-D-ribose 1-diphosphate; that span reads DPMLATGGS. Uracil contacts are provided by residues I194 and 199–201; that span reads GDA. A 5-phospho-alpha-D-ribose 1-diphosphate-binding site is contributed by D200.

The protein belongs to the UPRTase family. Mg(2+) is required as a cofactor.

It catalyses the reaction UMP + diphosphate = 5-phospho-alpha-D-ribose 1-diphosphate + uracil. It participates in pyrimidine metabolism; UMP biosynthesis via salvage pathway; UMP from uracil: step 1/1. Its activity is regulated as follows. Allosterically activated by GTP. Its function is as follows. Catalyzes the conversion of uracil and 5-phospho-alpha-D-ribose 1-diphosphate (PRPP) to UMP and diphosphate. This Clostridium acetobutylicum (strain ATCC 824 / DSM 792 / JCM 1419 / IAM 19013 / LMG 5710 / NBRC 13948 / NRRL B-527 / VKM B-1787 / 2291 / W) protein is Uracil phosphoribosyltransferase.